A 501-amino-acid polypeptide reads, in one-letter code: ATP synthase subunit alpha (501 aa).

Residue 169 to 176 (GDRQTGKT) participates in ATP binding.

Belongs to the ATPase alpha/beta chains family. F-type ATPases have 2 components, CF(1) - the catalytic core - and CF(0) - the membrane proton channel. CF(1) has five subunits: alpha(3), beta(3), gamma(1), delta(1), epsilon(1). CF(0) has three main subunits: a(1), b(2) and c(9-12). The alpha and beta chains form an alternating ring which encloses part of the gamma chain. CF(1) is attached to CF(0) by a central stalk formed by the gamma and epsilon chains, while a peripheral stalk is formed by the delta and b chains.

The protein localises to the cell membrane. The catalysed reaction is ATP + H2O + 4 H(+)(in) = ADP + phosphate + 5 H(+)(out). Its function is as follows. Produces ATP from ADP in the presence of a proton gradient across the membrane. The alpha chain is a regulatory subunit. The polypeptide is ATP synthase subunit alpha (Streptococcus equi subsp. equi (strain 4047)).